Here is a 166-residue protein sequence, read N- to C-terminus: MIYIDNRQNKIKVNEELENKIKEIIDYALKEEKVNIDYEISVVFIDNNSIKEINKDYRNIDKATDVLSFPMLDYEDGEVFKDIYLNYEFDESDLDEGNLVLGDIALSLEKAEEQSKEFGHSFLRETCYLTIHSVLHLLGYDHMEEDEKVIMRQREEEILKSFNLHR.

The Zn(2+) site is built by H132, H136, and H142.

The protein belongs to the endoribonuclease YbeY family. Zn(2+) serves as cofactor.

It localises to the cytoplasm. In terms of biological role, single strand-specific metallo-endoribonuclease involved in late-stage 70S ribosome quality control and in maturation of the 3' terminus of the 16S rRNA. This is Endoribonuclease YbeY from Clostridium botulinum (strain ATCC 19397 / Type A).